We begin with the raw amino-acid sequence, 101 residues long: Large ribosomal subunit protein uL24 (101 aa).

It belongs to the universal ribosomal protein uL24 family. In terms of assembly, part of the 50S ribosomal subunit.

Functionally, one of two assembly initiator proteins, it binds directly to the 5'-end of the 23S rRNA, where it nucleates assembly of the 50S subunit. Its function is as follows. One of the proteins that surrounds the polypeptide exit tunnel on the outside of the subunit. In Dinoroseobacter shibae (strain DSM 16493 / NCIMB 14021 / DFL 12), this protein is Large ribosomal subunit protein uL24.